The following is a 282-amino-acid chain: Pantothenate synthetase (282 aa).

30–37 (MGNLHDGH) provides a ligand contact to ATP. H37 serves as the catalytic Proton donor. Q61 provides a ligand contact to (R)-pantoate. Residue Q61 participates in beta-alanine binding. Residue 149-152 (GNKD) coordinates ATP. Q155 is a binding site for (R)-pantoate. ATP is bound by residues A178 and 186–189 (MSSR).

This sequence belongs to the pantothenate synthetase family. As to quaternary structure, homodimer.

The protein localises to the cytoplasm. It carries out the reaction (R)-pantoate + beta-alanine + ATP = (R)-pantothenate + AMP + diphosphate + H(+). It functions in the pathway cofactor biosynthesis; (R)-pantothenate biosynthesis; (R)-pantothenate from (R)-pantoate and beta-alanine: step 1/1. Functionally, catalyzes the condensation of pantoate with beta-alanine in an ATP-dependent reaction via a pantoyl-adenylate intermediate. The chain is Pantothenate synthetase from Marinomonas sp. (strain MWYL1).